The chain runs to 971 residues: Unconventional myosin-XIX (971 aa).

The tract at residues 1 to 25 (MSRPLSKNTEREPKQINGHQNNLSN) is disordered. A Myosin motor domain is found at 48–755 (HLYDDLTKVN…MVELLEERRL (708 aa)). 145–152 (GESGAGKT) serves as a coordination point for ATP. Residues 611–633 (LESLMQILHSTTPHYIRCIKPNV) are actin-binding. IQ domains follow at residues 758–787 (ISSK…ATTI) and 780–809 (QSKA…AATV). The segment at 826 to 971 (AAELDDSTED…FNEILLEKTV (146 aa)) is myMOMA region.

Belongs to the TRAFAC class myosin-kinesin ATPase superfamily. Myosin family. In terms of assembly, myosin is a hexamer of 2 heavy chains and 4 light chains.

The protein resides in the mitochondrion outer membrane. The protein localises to the cytoplasm. It localises to the cytoskeleton. Functionally, actin-based motor molecule with ATPase activity that localizes to the mitochondrion outer membrane. Motor protein that moves towards the plus-end of actin filaments. Required for mitochondrial inheritance during mitosis. May be involved in mitochondrial transport or positioning. The polypeptide is Unconventional myosin-XIX (Xenopus laevis (African clawed frog)).